We begin with the raw amino-acid sequence, 270 residues long: Undecaprenyl-diphosphatase 1 (270 aa).

7 helical membrane passes run 5-25 (YYVLKYLILGLFQGLTEPIPI), 42-62 (IEGFSFELLVNSASLLAVLLI), 89-109 (FFFIIYLVIATIPAGVIGVLF), 117-137 (LKGVKMVGISLLITAVGLWII), 192-212 (FSFLLYIPVSLGGLLLSITDI), 220-240 (TLFVPYVVAFIATFIMTYISL), and 250-270 (GNLKYFSFYCIIVGVLTLIFL).

This sequence belongs to the UppP family.

It is found in the cell membrane. The enzyme catalyses di-trans,octa-cis-undecaprenyl diphosphate + H2O = di-trans,octa-cis-undecaprenyl phosphate + phosphate + H(+). Functionally, catalyzes the dephosphorylation of undecaprenyl diphosphate (UPP). Confers resistance to bacitracin. The polypeptide is Undecaprenyl-diphosphatase 1 (Bacillus cereus (strain ATCC 14579 / DSM 31 / CCUG 7414 / JCM 2152 / NBRC 15305 / NCIMB 9373 / NCTC 2599 / NRRL B-3711)).